The chain runs to 207 residues: Large ribosomal subunit protein bL25 (207 aa).

Positions 1–20 (MANHQIKAQRRKDEGKGASR) are disordered.

It belongs to the bacterial ribosomal protein bL25 family. CTC subfamily. As to quaternary structure, part of the 50S ribosomal subunit; part of the 5S rRNA/L5/L18/L25 subcomplex. Contacts the 5S rRNA. Binds to the 5S rRNA independently of L5 and L18.

In terms of biological role, this is one of the proteins that binds to the 5S RNA in the ribosome where it forms part of the central protuberance. This Xylella fastidiosa (strain M12) protein is Large ribosomal subunit protein bL25.